Reading from the N-terminus, the 1407-residue chain is Transcription initiation factor TFIID subunit 2 (1407 aa).

Residues Thr-158 and Thr-161 each carry the phosphothreonine modification. Phosphoserine is present on Ser-163. Positions 252 to 336 (KLIGQNGEES…EERRNIEESN (85 aa)) are disordered. Residues 277–307 (GKPARVIKDEDKDSNLKNDEEGKNSKSKDAQ) show a composition bias toward basic and acidic residues. Positions 304–337 (KDAQDNDEEEEEGESDEEEEEGEEERRNIEESNN) form a coiled coil. Over residues 308–326 (DNDEEEEEGESDEEEEEGE) the composition is skewed to acidic residues. At Ser-318 the chain carries Phosphoserine. The segment at 1285-1350 (EEGKLDIVIK…KVTSKQRKVK (66 aa)) is highly charged.

The protein belongs to the TAF2 family. As to quaternary structure, the 1.2 MDa TFIID complex is composed of TATA binding protein (TBP) and the 14 TBP-associated factors. One copy of each TAF1, TAF2, TAF3, TAF7, TAF8, TAF11, TAF13, two copies of each TAF4, TAF5, TAF6, TAF9, TAF10, TAF12, and three copies of TAF14.

It localises to the nucleus. Functions as a component of the DNA-binding general transcription factor complex TFIID. Binding of TFIID to a promoter (with or without TATA element) is the initial step in pre-initiation complex (PIC) formation. TFIID plays a key role in the regulation of gene expression by RNA polymerase II through different activities such as transcription activator interaction, core promoter recognition and selectivity, TFIIA and TFIIB interaction, chromatin modification (histone acetylation by TAF1), facilitation of DNA opening and initiation of transcription. The chain is Transcription initiation factor TFIID subunit 2 (TAF2) from Saccharomyces cerevisiae (strain ATCC 204508 / S288c) (Baker's yeast).